A 305-amino-acid chain; its full sequence is UDP-3-O-acyl-N-acetylglucosamine deacetylase (305 aa).

3 residues coordinate Zn(2+): H79, H238, and D242. H265 functions as the Proton donor in the catalytic mechanism.

Belongs to the LpxC family. Zn(2+) serves as cofactor.

It carries out the reaction a UDP-3-O-[(3R)-3-hydroxyacyl]-N-acetyl-alpha-D-glucosamine + H2O = a UDP-3-O-[(3R)-3-hydroxyacyl]-alpha-D-glucosamine + acetate. It functions in the pathway glycolipid biosynthesis; lipid IV(A) biosynthesis; lipid IV(A) from (3R)-3-hydroxytetradecanoyl-[acyl-carrier-protein] and UDP-N-acetyl-alpha-D-glucosamine: step 2/6. In terms of biological role, catalyzes the hydrolysis of UDP-3-O-myristoyl-N-acetylglucosamine to form UDP-3-O-myristoylglucosamine and acetate, the committed step in lipid A biosynthesis. The sequence is that of UDP-3-O-acyl-N-acetylglucosamine deacetylase from Sodalis glossinidius (strain morsitans).